The chain runs to 163 residues: MADSSFDIVSKVDRQEVDNALNQAAKELATRFDFRGTDTKIAWKGDEAVELTSSTEERVKAAVDVFKEKLIRRDISLKAFEAGEPQASGKTYKVTGALKQGISSENAKKITKLIRDAGPKNVKTQIQGDEVRVTSKKRDDLQAVIAMLKKADLDVALQFVNYR.

Belongs to the YajQ family.

Functionally, nucleotide-binding protein. This chain is Nucleotide-binding protein MT0592, found in Mycobacterium tuberculosis (strain CDC 1551 / Oshkosh).